Reading from the N-terminus, the 299-residue chain is MAEPRGIISAMLTPFTSDVGPVDYEWLPGYLRFLADGGLHGVLALGTTGEGPSMSVAERIRTLEIIMAHRGELSVIAGTGCAALTDTIALSRAAIDLGVDAILVMPPFYIKQPDETGILAYFRALCDALPADARVMLYHIPQVTGVPITRTIIDGLLASHGTQFYGLKDSSGDWEHSKMLIDSYPQLRIFTGSDRLIARALAGGAAGAITALSSAFPKLARAVFDAFHQGGDVAAAQARLSAVRDLVNPINTPPALKAALTWTSDLPETALRLPLLPLSNEEVAALRAAYERIMAGTTP.

Catalysis depends on charge relay system residues Thr47 and Tyr109. Tyr138 acts as the Proton donor in catalysis. The active-site Schiff-base intermediate with substrate is Lys168.

It belongs to the DapA family. In terms of assembly, homotetramer.

It localises to the cytoplasm. This is an uncharacterized protein from Chloroflexus aurantiacus (strain ATCC 29366 / DSM 635 / J-10-fl).